We begin with the raw amino-acid sequence, 370 residues long: Protein-tyrosine sulfotransferase 1 (370 aa).

Residues 1 to 8 (MVGKLKQN) are Cytoplasmic-facing. A helical; Signal-anchor for type II membrane protein membrane pass occupies residues 9–25 (LLLACLVISSVTVFYLG). Residues 26–370 (QHAMECHHRI…KEKPQTEQVE (345 aa)) are Lumenal-facing. N-linked (GlcNAc...) asparagine glycosylation is present at N60. 79 to 83 (RSGTT) contributes to the 3'-phosphoadenylyl sulfate binding site. Residues C97 and C157 are joined by a disulfide bond. E100 serves as the catalytic Proton donor/acceptor. Residues 102–106 (RVIPR) are interaction with peptide substrate. The 3'-phosphoadenylyl sulfate site is built by R184, S192, and R196. C226 and C234 are oxidised to a cystine. Y239 serves as a coordination point for 3'-phosphoadenylyl sulfate. N262 carries N-linked (GlcNAc...) asparagine glycosylation. 3'-phosphoadenylyl sulfate-binding positions include 286-295 (STDQVIKPVN) and K301.

The protein belongs to the protein sulfotransferase family. Homodimer. Can also form heterodimers with TPST2. N-glycosylated. As to expression, ubiquitous. Detected in heart, brain, lung, liver, spleen, kidney, skeletal muscle and testis.

It is found in the golgi apparatus membrane. The catalysed reaction is L-tyrosyl-[protein] + 3'-phosphoadenylyl sulfate = O-sulfo-L-tyrosine-[protein] + adenosine 3',5'-bisphosphate + H(+). In terms of biological role, catalyzes the O-sulfation of tyrosine residues within acidic motifs of polypeptides, using 3'-phosphoadenylyl sulfate (PAPS) as cosubstrate. The sequence is that of Protein-tyrosine sulfotransferase 1 (Tpst1) from Mus musculus (Mouse).